The chain runs to 71 residues: Biotinylated protein TB7.3 homolog (71 aa).

One can recognise a Biotinyl-binding domain in the interval 2–71 (AEDVRAEIVA…QAGDLIAVIS (70 aa)). Position 37 is an N6-biotinyllysine (K37).

This chain is Biotinylated protein TB7.3 homolog, found in Mycobacterium leprae (strain TN).